The chain runs to 187 residues: UPF0301 protein Sputcn32_2681 (187 aa).

It belongs to the UPF0301 (AlgH) family.

The sequence is that of UPF0301 protein Sputcn32_2681 from Shewanella putrefaciens (strain CN-32 / ATCC BAA-453).